The chain runs to 383 residues: MAWRSCFMKWTQINSINASSLCPKSTRLNIHPQQRCGFRKTERPSESKKGVQETEAEAGGHNRAVPPKPVPPLPPRRPHQLFRPLVFTVGFTGCSFGAAAILQYESVKSRVQLAIEEAKEEKRDTLLEGHDTTYWHNWWNQLSNFQKQVILLISAVDDFWSGLSEGQKTVTGIIALNTVVLCCWRVPAMQRFLVKYFTSNPASKTRCLPMVLSSFSHYSVIHMVVNMYVLWTFSSSIVSLLGREQFLALYLSGGVISTFVSYVFKTATGRLGPSLGASGSIMTVLAAVCTKIPEAKLGIVLLPVISFSAGNALKALVALDIAGLVLGWRFFDHAAHLGGALFGVWYIGYGHELIWRKREPLIKFWHELRNMSPGRPGPGGGGG.

A mitochondrion-targeting transit peptide spans 1-37 (MAWRSCFMKWTQINSINASSLCPKSTRLNIHPQQRCG). The segment at 35–75 (RCGFRKTERPSESKKGVQETEAEAGGHNRAVPPKPVPPLPP) is disordered. The Mitochondrial matrix segment spans residues 38 to 83 (FRKTERPSESKKGVQETEAEAGGHNRAVPPKPVPPLPPRRPHQLFR). The span at 39-52 (RKTERPSESKKGVQ) shows a compositional bias: basic and acidic residues. Positions 66-75 (PPKPVPPLPP) are enriched in pro residues. Residues 84–104 (PLVFTVGFTGCSFGAAAILQY) traverse the membrane as a helical segment. The Mitochondrial intermembrane portion of the chain corresponds to 105–168 (ESVKSRVQLA…FWSGLSEGQK (64 aa)). The chain crosses the membrane as a helical span at residues 169-189 (TVTGIIALNTVVLCCWRVPAM). Over 190 to 219 (QRFLVKYFTSNPASKTRCLPMVLSSFSHYS) the chain is Mitochondrial matrix. A helical transmembrane segment spans residues 220 to 240 (VIHMVVNMYVLWTFSSSIVSL). The Mitochondrial intermembrane segment spans residues 241–245 (LGREQ). The helical transmembrane segment at 246–266 (FLALYLSGGVISTFVSYVFKT) threads the bilayer. Topologically, residues 267–271 (ATGRL) are mitochondrial matrix. Residues 272–292 (GPSLGASGSIMTVLAAVCTKI) form a helical membrane-spanning segment. S278 (nucleophile) is an active-site residue. Residues 293-298 (PEAKLG) are Mitochondrial intermembrane-facing. A helical transmembrane segment spans residues 299-319 (IVLLPVISFSAGNALKALVAL). At 320-334 (DIAGLVLGWRFFDHA) the chain is on the mitochondrial matrix side. Residues 335–355 (AHLGGALFGVWYIGYGHELIW) form a helical membrane-spanning segment. Residue H336 is part of the active site. The Mitochondrial intermembrane portion of the chain corresponds to 356 to 383 (RKREPLIKFWHELRNMSPGRPGPGGGGG).

It belongs to the peptidase S54 family.

It localises to the mitochondrion inner membrane. The catalysed reaction is Cleaves type-1 transmembrane domains using a catalytic dyad composed of serine and histidine that are contributed by different transmembrane domains.. Functionally, required for the control of apoptosis during postnatal growth. Essential for proteolytic processing of an antiapoptotic form of opa1 which prevents the release of mitochondrial cytochrome c in response to intrinsic apoptotic signals. This is Presenilin-associated rhomboid-like protein A, mitochondrial (parla) from Danio rerio (Zebrafish).